The primary structure comprises 262 residues: Putative ABC transporter ATP-binding protein SAV_3608 (262 aa).

The 231-residue stretch at 18–248 (LDVAGLAFAY…DTLMRAHRLE (231 aa)) folds into the ABC transporter domain. Position 51 to 58 (51 to 58 (GPNGAGKT)) interacts with ATP.

The protein belongs to the ABC transporter superfamily.

The protein localises to the cell membrane. Functionally, probably part of an ABC transporter complex. Responsible for energy coupling to the transport system. This is Putative ABC transporter ATP-binding protein SAV_3608 from Streptomyces avermitilis (strain ATCC 31267 / DSM 46492 / JCM 5070 / NBRC 14893 / NCIMB 12804 / NRRL 8165 / MA-4680).